The following is a 570-amino-acid chain: Dihydroxy-acid dehydratase (570 aa).

Residues 1-25 are disordered; the sequence is MSQQDSPANADHRRRHSSIVVDGPG. Cys60 contacts [2Fe-2S] cluster. Mg(2+) is bound at residue Asp92. Cys133 is a binding site for [2Fe-2S] cluster. 2 residues coordinate Mg(2+): Asp134 and Lys135. Lys135 is subject to N6-carboxylysine. [2Fe-2S] cluster is bound at residue Cys202. Glu453 is a binding site for Mg(2+). The Proton acceptor role is filled by Ser479.

It belongs to the IlvD/Edd family. As to quaternary structure, homodimer. It depends on [2Fe-2S] cluster as a cofactor. The cofactor is Mg(2+).

The catalysed reaction is (2R)-2,3-dihydroxy-3-methylbutanoate = 3-methyl-2-oxobutanoate + H2O. The enzyme catalyses (2R,3R)-2,3-dihydroxy-3-methylpentanoate = (S)-3-methyl-2-oxopentanoate + H2O. It functions in the pathway amino-acid biosynthesis; L-isoleucine biosynthesis; L-isoleucine from 2-oxobutanoate: step 3/4. Its pathway is amino-acid biosynthesis; L-valine biosynthesis; L-valine from pyruvate: step 3/4. Functionally, functions in the biosynthesis of branched-chain amino acids. Catalyzes the dehydration of (2R,3R)-2,3-dihydroxy-3-methylpentanoate (2,3-dihydroxy-3-methylvalerate) into 2-oxo-3-methylpentanoate (2-oxo-3-methylvalerate) and of (2R)-2,3-dihydroxy-3-methylbutanoate (2,3-dihydroxyisovalerate) into 2-oxo-3-methylbutanoate (2-oxoisovalerate), the penultimate precursor to L-isoleucine and L-valine, respectively. The sequence is that of Dihydroxy-acid dehydratase from Chromohalobacter salexigens (strain ATCC BAA-138 / DSM 3043 / CIP 106854 / NCIMB 13768 / 1H11).